The sequence spans 194 residues: Oligoribonuclease (194 aa).

The 164-residue stretch at 11-174 (LIWIDLEMTG…SDVRDSINEL (164 aa)) folds into the Exonuclease domain. The active site involves tyrosine 132.

It belongs to the oligoribonuclease family.

It is found in the cytoplasm. Its function is as follows. 3'-to-5' exoribonuclease specific for small oligoribonucleotides. This is Oligoribonuclease from Xanthomonas oryzae pv. oryzae (strain MAFF 311018).